The sequence spans 51 residues: Small ribosomal subunit protein eS31 (51 aa).

Zn(2+) is bound by residues cysteine 21, cysteine 24, cysteine 39, and cysteine 42. The C4-type zinc-finger motif lies at 21–42; the sequence is CVRCSNGVFMADHGDRYACGKC.

It belongs to the eukaryotic ribosomal protein eS31 family. Part of the 30S ribosomal subunit. Requires Zn(2+) as cofactor.

The chain is Small ribosomal subunit protein eS31 from Methanothermobacter thermautotrophicus (strain ATCC 29096 / DSM 1053 / JCM 10044 / NBRC 100330 / Delta H) (Methanobacterium thermoautotrophicum).